The chain runs to 469 residues: Soluble pyridine nucleotide transhydrogenase (469 aa).

39-48 (ERENSVGGGC) serves as a coordination point for FAD.

Belongs to the class-I pyridine nucleotide-disulfide oxidoreductase family. The cofactor is FAD.

It localises to the cytoplasm. The enzyme catalyses NAD(+) + NADPH = NADH + NADP(+). Conversion of NADPH, generated by peripheral catabolic pathways, to NADH, which can enter the respiratory chain for energy generation. The chain is Soluble pyridine nucleotide transhydrogenase from Photobacterium profundum (strain SS9).